The chain runs to 511 residues: Ribonuclease Y (511 aa).

Residues 3–23 (VGILIGIIILGVVGFIQYTLI) form a helical membrane-spanning segment. The 86-residue stretch at 201 to 286 (TVHVVALPND…EMVERAIKDV (86 aa)) folds into the KH domain. An HD domain is found at 327 to 420 (VLKHSIEVSY…VQAADAISAA (94 aa)).

This sequence belongs to the RNase Y family.

The protein localises to the cell membrane. Functionally, endoribonuclease that initiates mRNA decay. This chain is Ribonuclease Y, found in Clostridium perfringens (strain SM101 / Type A).